The primary structure comprises 457 residues: Argininosuccinate lyase (457 aa).

This sequence belongs to the lyase 1 family. Argininosuccinate lyase subfamily.

Its subcellular location is the cytoplasm. It catalyses the reaction 2-(N(omega)-L-arginino)succinate = fumarate + L-arginine. Its pathway is amino-acid biosynthesis; L-arginine biosynthesis; L-arginine from L-ornithine and carbamoyl phosphate: step 3/3. The chain is Argininosuccinate lyase from Bacillus pumilus (strain SAFR-032).